A 203-amino-acid polypeptide reads, in one-letter code: ATP-dependent Clp protease proteolytic subunit 1 (203 aa).

Ser-101 acts as the Nucleophile in catalysis. Residue His-126 is part of the active site.

This sequence belongs to the peptidase S14 family. Fourteen ClpP subunits assemble into 2 heptameric rings which stack back to back to give a disk-like structure with a central cavity, resembling the structure of eukaryotic proteasomes.

Its subcellular location is the cytoplasm. It catalyses the reaction Hydrolysis of proteins to small peptides in the presence of ATP and magnesium. alpha-casein is the usual test substrate. In the absence of ATP, only oligopeptides shorter than five residues are hydrolyzed (such as succinyl-Leu-Tyr-|-NHMec, and Leu-Tyr-Leu-|-Tyr-Trp, in which cleavage of the -Tyr-|-Leu- and -Tyr-|-Trp bonds also occurs).. In terms of biological role, cleaves peptides in various proteins in a process that requires ATP hydrolysis. Has a chymotrypsin-like activity. Plays a major role in the degradation of misfolded proteins. The protein is ATP-dependent Clp protease proteolytic subunit 1 of Synechococcus sp. (strain JA-3-3Ab) (Cyanobacteria bacterium Yellowstone A-Prime).